The following is a 151-amino-acid chain: Small ribosomal subunit protein uS15 (151 aa).

Belongs to the universal ribosomal protein uS15 family.

This is Small ribosomal subunit protein uS15 (RPS13) from Candida maltosa (Yeast).